The sequence spans 346 residues: S-adenosylmethionine:tRNA ribosyltransferase-isomerase (346 aa).

This sequence belongs to the QueA family. In terms of assembly, monomer.

Its subcellular location is the cytoplasm. It catalyses the reaction 7-aminomethyl-7-carbaguanosine(34) in tRNA + S-adenosyl-L-methionine = epoxyqueuosine(34) in tRNA + adenine + L-methionine + 2 H(+). It functions in the pathway tRNA modification; tRNA-queuosine biosynthesis. In terms of biological role, transfers and isomerizes the ribose moiety from AdoMet to the 7-aminomethyl group of 7-deazaguanine (preQ1-tRNA) to give epoxyqueuosine (oQ-tRNA). The sequence is that of S-adenosylmethionine:tRNA ribosyltransferase-isomerase from Lactococcus lactis subsp. cremoris (strain MG1363).